A 591-amino-acid polypeptide reads, in one-letter code: Adenine deaminase (591 aa).

The protein belongs to the metallo-dependent hydrolases superfamily. Adenine deaminase family. Homodimer. Requires Mn(2+) as cofactor.

The enzyme catalyses adenine + H2O + H(+) = hypoxanthine + NH4(+). The protein is Adenine deaminase of Edwardsiella ictaluri (strain 93-146).